Here is a 115-residue protein sequence, read N- to C-terminus: MNMFIVLLVNISLASCLILIAFWLPQLNIYTEKANPYECGFDPMSSARLPFSMKFFLVAITFLLFDLEIALLLPLPWAIQMSNIKATMLTSFILVSVLAMGLAYEWLQKGLEWTE.

Helical transmembrane passes span 4–24 (FIVL…AFWL), 55–75 (FFLV…LLPL), and 87–107 (TMLT…YEWL).

It belongs to the complex I subunit 3 family. As to quaternary structure, core subunit of respiratory chain NADH dehydrogenase (Complex I) which is composed of 45 different subunits. Interacts with TMEM186. Interacts with TMEM242.

It localises to the mitochondrion inner membrane. It catalyses the reaction a ubiquinone + NADH + 5 H(+)(in) = a ubiquinol + NAD(+) + 4 H(+)(out). Core subunit of the mitochondrial membrane respiratory chain NADH dehydrogenase (Complex I) which catalyzes electron transfer from NADH through the respiratory chain, using ubiquinone as an electron acceptor. Essential for the catalytic activity of complex I. The protein is NADH-ubiquinone oxidoreductase chain 3 of Reithrodontomys megalotis (Western harvest mouse).